Here is a 327-residue protein sequence, read N- to C-terminus: Zinc transport protein ZntB (327 aa).

Topologically, residues 1–273 (MEAIKGSDVN…ARRTYTMSLM (273 aa)) are cytoplasmic. A helical membrane pass occupies residues 274–294 (AMVFLPSTFLTGLFGVNLGGI). The Periplasmic segment spans residues 295–300 (PGGGWR). Residues 301 to 321 (FGFSLFCILLVVLIGGVTLWL) form a helical membrane-spanning segment. At 322–327 (HRSKWL) the chain is on the cytoplasmic side.

Belongs to the CorA metal ion transporter (MIT) (TC 1.A.35) family.

It localises to the cell inner membrane. It carries out the reaction Zn(2+)(out) + H(+)(out) = Zn(2+)(in) + H(+)(in). In terms of biological role, zinc transporter. Acts as a Zn(2+):proton symporter, which likely mediates zinc ion uptake. The sequence is that of Zinc transport protein ZntB from Salmonella choleraesuis (strain SC-B67).